Consider the following 70-residue polypeptide: Large ribosomal subunit protein eL38 (70 aa).

Belongs to the eukaryotic ribosomal protein eL38 family.

In Caenorhabditis elegans, this protein is Large ribosomal subunit protein eL38 (rpl-38).